A 280-amino-acid chain; its full sequence is Undecaprenyl-diphosphatase (280 aa).

A run of 8 helical transmembrane segments spans residues M1 to V21, F41 to Y61, F87 to F107, L115 to V135, I147 to G167, K186 to L206, I225 to F245, and Y260 to V280.

This sequence belongs to the UppP family.

The protein resides in the cell inner membrane. It catalyses the reaction di-trans,octa-cis-undecaprenyl diphosphate + H2O = di-trans,octa-cis-undecaprenyl phosphate + phosphate + H(+). Catalyzes the dephosphorylation of undecaprenyl diphosphate (UPP). Confers resistance to bacitracin. The protein is Undecaprenyl-diphosphatase of Porphyromonas gingivalis (strain ATCC 33277 / DSM 20709 / CIP 103683 / JCM 12257 / NCTC 11834 / 2561).